The primary structure comprises 347 residues: Coproporphyrinogen-III oxidase, aerobic 2 (347 aa).

Residues 1-31 are disordered; sequence MGRHSDNSLQESANHTVLLTSPTNTIPKDSR. Residues 7-31 are compositionally biased toward polar residues; sequence NSLQESANHTVLLTSPTNTIPKDSR. Residues 75-84 form an important for dimerization region; that stretch reads VIREGRVFEQ. Ser-119 is a binding site for substrate. The Proton donor role is filled by His-133. Residues 135–137 and 305–310 contribute to the substrate site; these read NYR and KGRTES. The important for dimerization stretch occupies residues 287–322; that stretch reads YVEFNLVYDRGTVFGLQTKGRTESILMSLPPLARWE.

This sequence belongs to the aerobic coproporphyrinogen-III oxidase family. Homodimer.

It localises to the cytoplasm. The enzyme catalyses coproporphyrinogen III + O2 + 2 H(+) = protoporphyrinogen IX + 2 CO2 + 2 H2O. It participates in porphyrin-containing compound metabolism; protoporphyrin-IX biosynthesis; protoporphyrinogen-IX from coproporphyrinogen-III (O2 route): step 1/1. In terms of biological role, key enzyme in heme biosynthesis. Catalyzes the oxidative decarboxylation of propionic acid side chains of rings A and B of coproporphyrinogen III. The sequence is that of Coproporphyrinogen-III oxidase, aerobic 2 from Nostoc sp. (strain PCC 7120 / SAG 25.82 / UTEX 2576).